Consider the following 138-residue polypeptide: Cysteine desulfuration protein SufE (138 aa).

Cys51 acts as the Cysteine persulfide intermediate in catalysis.

It belongs to the SufE family. In terms of assembly, homodimer. Interacts with SufS.

Its subcellular location is the cytoplasm. It functions in the pathway cofactor biosynthesis; iron-sulfur cluster biosynthesis. In terms of biological role, participates in cysteine desulfuration mediated by SufS. Cysteine desulfuration mobilizes sulfur from L-cysteine to yield L-alanine and constitutes an essential step in sulfur metabolism for biosynthesis of a variety of sulfur-containing biomolecules. Functions as a sulfur acceptor for SufS, by mediating the direct transfer of the sulfur atom from the S-sulfanylcysteine of SufS, an intermediate product of cysteine desulfuration process. The polypeptide is Cysteine desulfuration protein SufE (Escherichia coli O81 (strain ED1a)).